We begin with the raw amino-acid sequence, 162 residues long: Ribonuclease (162 aa).

Residues 1–29 (MKKISSVFTMFALIAAILFSGFIPQQAYA) form the signal peptide. Residues 30–53 (ETTLTPTATNKTASIQLTSDVHTL) constitute a propeptide that is removed on maturation. Glu-125 (proton acceptor) is an active-site residue. The active-site Proton donor is His-154.

The protein belongs to the ribonuclease N1/T1 family.

It is found in the secreted. Its function is as follows. This is a purine-specific ribonuclease. The sequence is that of Ribonuclease from Bacillus pumilus (Bacillus mesentericus).